The primary structure comprises 145 residues: Ribosome maturation factor RimP (145 aa).

The protein belongs to the RimP family.

It localises to the cytoplasm. In terms of biological role, required for maturation of 30S ribosomal subunits. This chain is Ribosome maturation factor RimP, found in Borreliella burgdorferi (strain ATCC 35210 / DSM 4680 / CIP 102532 / B31) (Borrelia burgdorferi).